We begin with the raw amino-acid sequence, 364 residues long: Aminomethyltransferase (364 aa).

It belongs to the GcvT family. As to quaternary structure, the glycine cleavage system is composed of four proteins: P, T, L and H.

The catalysed reaction is N(6)-[(R)-S(8)-aminomethyldihydrolipoyl]-L-lysyl-[protein] + (6S)-5,6,7,8-tetrahydrofolate = N(6)-[(R)-dihydrolipoyl]-L-lysyl-[protein] + (6R)-5,10-methylene-5,6,7,8-tetrahydrofolate + NH4(+). Its function is as follows. The glycine cleavage system catalyzes the degradation of glycine. This Thermotoga maritima (strain ATCC 43589 / DSM 3109 / JCM 10099 / NBRC 100826 / MSB8) protein is Aminomethyltransferase.